Consider the following 487-residue polypeptide: 6-phosphogluconate dehydrogenase, decarboxylating 1, chloroplastic (487 aa).

Met1 bears the N-acetylmethionine mark. NADP(+) is bound by residues 13–18 (GLAVMG), 36–38 (NRT), 80–82 (VKA), and Asn108. Residues Asn108 and 134–136 (SGG) contribute to the substrate site. Lys188 serves as the catalytic Proton acceptor. 191–192 (HN) lines the substrate pocket. The Proton donor role is filled by Glu195. Substrate is bound by residues Tyr196, Lys266, Arg293, Arg458, and His464.

This sequence belongs to the 6-phosphogluconate dehydrogenase family. In terms of assembly, forms homodimer. Forms heterodimers with PGD2 or PGD3.

It is found in the plastid. Its subcellular location is the chloroplast. The protein localises to the cytoplasm. The protein resides in the cytosol. It catalyses the reaction 6-phospho-D-gluconate + NADP(+) = D-ribulose 5-phosphate + CO2 + NADPH. The protein operates within carbohydrate degradation; pentose phosphate pathway; D-ribulose 5-phosphate from D-glucose 6-phosphate (oxidative stage): step 3/3. Its function is as follows. Catalyzes the oxidative decarboxylation of 6-phosphogluconate to ribulose 5-phosphate and CO(2), with concomitant reduction of NADP to NADPH. The sequence is that of 6-phosphogluconate dehydrogenase, decarboxylating 1, chloroplastic from Arabidopsis thaliana (Mouse-ear cress).